The sequence spans 303 residues: Elongation factor Ts (303 aa).

Residues 80–83 (TDFV) are involved in Mg(2+) ion dislocation from EF-Tu.

This sequence belongs to the EF-Ts family.

The protein localises to the cytoplasm. Its function is as follows. Associates with the EF-Tu.GDP complex and induces the exchange of GDP to GTP. It remains bound to the aminoacyl-tRNA.EF-Tu.GTP complex up to the GTP hydrolysis stage on the ribosome. The sequence is that of Elongation factor Ts from Clostridium botulinum (strain Alaska E43 / Type E3).